Consider the following 258-residue polypeptide: uncharacterized protein (258 aa).

The N-terminal stretch at 1 to 20 (MKCFQKLYIFILILIVLMAG) is a signal peptide. Cys21 carries the N-palmitoyl cysteine lipid modification. Cys21 is lipidated: S-diacylglycerol cysteine.

The protein belongs to the staphylococcal tandem lipoprotein family.

Its subcellular location is the cell membrane. This is an uncharacterized protein from Staphylococcus aureus (strain bovine RF122 / ET3-1).